Consider the following 451-residue polypeptide: NADH-quinone oxidoreductase subunit D (451 aa).

The protein belongs to the complex I 49 kDa subunit family. In terms of assembly, NDH-1 is composed of 14 different subunits. Subunits NuoB, C, D, E, F, and G constitute the peripheral sector of the complex.

Its subcellular location is the cell inner membrane. The catalysed reaction is a quinone + NADH + 5 H(+)(in) = a quinol + NAD(+) + 4 H(+)(out). Functionally, NDH-1 shuttles electrons from NADH, via FMN and iron-sulfur (Fe-S) centers, to quinones in the respiratory chain. The immediate electron acceptor for the enzyme in this species is believed to be a menaquinone. Couples the redox reaction to proton translocation (for every two electrons transferred, four hydrogen ions are translocated across the cytoplasmic membrane), and thus conserves the redox energy in a proton gradient. This is NADH-quinone oxidoreductase subunit D from Salinibacter ruber (strain DSM 13855 / M31).